The following is a 208-amino-acid chain: Large ribosomal subunit protein bL25 (208 aa).

This sequence belongs to the bacterial ribosomal protein bL25 family. CTC subfamily. Part of the 50S ribosomal subunit; part of the 5S rRNA/L5/L18/L25 subcomplex. Contacts the 5S rRNA. Binds to the 5S rRNA independently of L5 and L18.

This is one of the proteins that binds to the 5S RNA in the ribosome where it forms part of the central protuberance. This chain is Large ribosomal subunit protein bL25, found in Bartonella quintana (strain Toulouse) (Rochalimaea quintana).